Reading from the N-terminus, the 279-residue chain is uncharacterized protein (279 aa).

The HTH lysR-type domain maps to 14-71 (ITPNQIKLLIALHKTKSQNEAAKLLNIKPSSFNIQLKRLENKLGVKLYYSSPNGTVLT). The segment at residues 31 to 50 (QNEAAKLLNIKPSSFNIQLK) is a DNA-binding region (H-T-H motif).

The protein belongs to the LysR transcriptional regulatory family.

This is an uncharacterized protein from Methanocaldococcus jannaschii (strain ATCC 43067 / DSM 2661 / JAL-1 / JCM 10045 / NBRC 100440) (Methanococcus jannaschii).